Here is a 610-residue protein sequence, read N- to C-terminus: E3 ubiquitin-protein ligase hrd-1 (610 aa).

A signal peptide spans 1–23; it reads MRVSAGLMIGGSCVATAATILNA. At 24–41 the chain is on the lumenal side; it reads FLINKQFYPSIVYLSKSN. A helical transmembrane segment spans residues 42–62; sequence ASMAVIYVQGIVLVYLMFQLL. The Cytoplasmic segment spans residues 63–99; it reads KSILFGDLRAAEAEHLSERTWHAVLETCLAFTVFRDD. Residues 100–120 traverse the membrane as a helical segment; the sequence is FSAIFVMQFIGLLFIKCFHWL. Topologically, residues 121–144 are lumenal; the sequence is ADDRVDMMERSPVITLRFHLRMMT. Residues 145–165 form a helical membrane-spanning segment; the sequence is VLAALGFADSYFVSSAYFTTI. Residues 166–170 lie on the Cytoplasmic side of the membrane; that stretch reads TRGAS. A helical transmembrane segment spans residues 171-191; that stretch reads AQIVFGFEYAILLALVLHVTI. The Lumenal segment spans residues 192–215; it reads KYLLHMHDLRNPQSWDNKAVYLLY. A helical transmembrane segment spans residues 216–236; sequence AELFINLIRCLLYGFFAVVML. Residues 237-610 are Cytoplasmic-facing; that stretch reads RVHTFPLFSV…ARLLGENANQ (374 aa). Residues 292-333 form an RING-type; atypical zinc finger; that stretch reads CIICREEMTVDASPKRLPCSHVFHAHCLRSWFQRQQTCPTCR. Disordered regions lie at residues 386–408, 452–480, and 521–610; these read QPAGAGGAQPGAAQAGGQPGPFP, VNTTQGTSSETPPVNPSYSQLSTEELRRM, and RPVV…NANQ. Residues 452-474 show a composition bias toward polar residues; it reads VNTTQGTSSETPPVNPSYSQLST. Low complexity predominate over residues 560 to 589; it reads TESPSTSSTAPSTSSPVTASSTPTTSSTRT.

It belongs to the HRD1 family. In terms of assembly, homodimer.

It is found in the endoplasmic reticulum membrane. The catalysed reaction is S-ubiquitinyl-[E2 ubiquitin-conjugating enzyme]-L-cysteine + [acceptor protein]-L-lysine = [E2 ubiquitin-conjugating enzyme]-L-cysteine + N(6)-ubiquitinyl-[acceptor protein]-L-lysine.. It participates in protein modification; protein ubiquitination. Acts as an E3 ubiquitin-protein ligase which accepts ubiquitin specifically from endoplasmic reticulum-associated ubc-7 E2 ligase and transfers it to substrates, promoting their degradation. Component of the endoplasmic reticulum quality control (ERQC) system, which is also called the ER-associated degradation (ERAD) system, involved in ubiquitin-dependent degradation of misfolded endoplasmic reticulum proteins. Also promotes the degradation of normal but naturally short-lived proteins. Protects cells from ER stress-induced apoptosis. Thought to play a role together with hsp-3 in developmental growth and function of intestinal cells and to play a role together with hsp-4 in gonad formation. Plays a key role in the degradation of the potassium channel slo-1, perhaps acting directly, in targeting slo-1 to the ER-associated degradation pathway (ERAD), and also indirectly, via activation of the transcription factor skn-1, which mediates proteasomal homeostasis. This Caenorhabditis elegans protein is E3 ubiquitin-protein ligase hrd-1 (sel-11).